A 304-amino-acid chain; its full sequence is Phospholipase A1 (304 aa).

Cysteines 6 and 90 form a disulfide. Residue N61 is glycosylated (N-linked (GlcNAc...) asparagine). The active-site Nucleophile is the S140. D168 (charge relay system) is an active-site residue. 2 cysteine pairs are disulfide-bonded: C179–C184 and C222–C231. H233 functions as the Charge relay system in the catalytic mechanism. Disulfide bonds link C248–C272, C249–C297, and C265–C270.

The protein belongs to the AB hydrolase superfamily. Lipase family. Expressed by the venom gland.

Its subcellular location is the secreted. It catalyses the reaction a 1,2-diacyl-sn-glycero-3-phosphocholine + H2O = a 2-acyl-sn-glycero-3-phosphocholine + a fatty acid + H(+). Catalyzes the hydrolysis of phosphatidylcholine with phospholipase A1 activity. May act as an allergen and induce hemolytic activity. The protein is Phospholipase A1 of Vespa velutina (Asian yellow-legged hornet).